Consider the following 375-residue polypeptide: Geranylgeranyl transferase type-1 subunit beta (375 aa).

Residues 1 to 33 (MSETAVSIDSDRSKSEEEDEEEYSPPVQSSPSA) form a disordered region. An N-acetylserine modification is found at S2. PFTB repeat units follow at residues 157–199 (SKSL…YMLD), 206–247 (KESA…RLMG), 265–306 (PSLL…KLIG), and 313–354 (KMAL…SLLE). Geranylgeranyl diphosphate-binding positions include 232-234 (HGG) and 285-288 (RTNK). D291 and C293 together coordinate Zn(2+). Position 294–297 (294–297 (YAFW)) interacts with geranylgeranyl diphosphate. H342 provides a ligand contact to Zn(2+).

The protein belongs to the protein prenyltransferase subunit beta family. As to quaternary structure, heterodimer of an alpha and a beta subunit. Zn(2+) is required as a cofactor. The cofactor is Mg(2+). In terms of tissue distribution, expressed in roots, leaves, stems, flowers and siliques.

The catalysed reaction is geranylgeranyl diphosphate + L-cysteinyl-[protein] = S-geranylgeranyl-L-cysteinyl-[protein] + diphosphate. Its function is as follows. Catalyzes the transfer of a geranyl-geranyl moiety from geranyl-geranyl pyrophosphate to a cysteine at the fourth position from the C-terminus of proteins having the C-terminal sequence Cys-aliphatic-aliphatic-X (CaaX). Seems to exclusively prenylate CaaX substrates with leucine in the terminal position. The beta subunit is responsible for peptide-binding. May negatively regulate abscisic acid (ABA) signaling in guard cells and auxin-induced lateral root initiation. In terms of biological role, negatively regulates ABA signaling in guard cells. in negative regulation of auxin-induced lateral root initiation. This is Geranylgeranyl transferase type-1 subunit beta (GGB) from Arabidopsis thaliana (Mouse-ear cress).